Here is a 161-residue protein sequence, read N- to C-terminus: Thy-1 membrane glycoprotein (161 aa).

The signal sequence occupies residues M1–G19. A Pyrrolidone carboxylic acid modification is found at Q20. An Ig-like V-type domain is found at Q20 to K126. Disulfide bonds link C28-C130 and C38-C104. N-linked (GlcNAc...) asparagine glycans are attached at residues N42 and N79. Phosphoserine is present on S82. An N-linked (GlcNAc...) asparagine glycan is attached at N119. C130 carries GPI-anchor amidated cysteine; alternate lipidation. The propeptide at E131–L161 is removed in mature form. An N-linked (GlcNAc...) asparagine glycan is attached at N139.

It localises to the cell membrane. In terms of biological role, may play a role in cell-cell or cell-ligand interactions during synaptogenesis and other events in the brain. In Macaca mulatta (Rhesus macaque), this protein is Thy-1 membrane glycoprotein (THY1).